The following is a 162-amino-acid chain: Putative ripening-related protein 7 (162 aa).

The signal sequence occupies residues 1–30 (MAAAAASTKIVAVVVAVLLAILEMPSCAVA).

This sequence belongs to the kiwellin family.

The protein resides in the secreted. This Oryza sativa subsp. japonica (Rice) protein is Putative ripening-related protein 7.